The chain runs to 842 residues: Glucans biosynthesis glucosyltransferase H (842 aa).

7 consecutive transmembrane segments (helical) span residues 140–160 (ILLLLTLSQTVVATWYMKTIL), 194–214 (ILILFAVLFCWVSAGFWTALM), 513–533 (VFLTGVMSYLSAPLWFMFLAL), 568–588 (IALFASTMVLLFLPKLLSIIL), 615–635 (VLLAPVRMLFHTVFVVSAFLG), 656–676 (FMRHGSQLLLGLVWAVGMAWL), and 680–700 (FLFWLAPIVVSLILSPFVSAI).

Belongs to the glycosyltransferase 2 family. OpgH subfamily.

Its subcellular location is the cell inner membrane. The protein operates within glycan metabolism; osmoregulated periplasmic glucan (OPG) biosynthesis. Its function is as follows. Involved in the biosynthesis of osmoregulated periplasmic glucans (OPGs). This is Glucans biosynthesis glucosyltransferase H from Klebsiella pneumoniae subsp. pneumoniae (strain ATCC 700721 / MGH 78578).